A 326-amino-acid polypeptide reads, in one-letter code: GTP 3',8-cyclase (326 aa).

Residues 7-240 (AFARKFYYLR…AQVFHHSDYQ (234 aa)) form the Radical SAM core domain. Position 16 (arginine 16) interacts with GTP. 2 residues coordinate [4Fe-4S] cluster: cysteine 23 and cysteine 27. Residue tyrosine 29 participates in S-adenosyl-L-methionine binding. Cysteine 30 is a binding site for [4Fe-4S] cluster. Arginine 65 contributes to the GTP binding site. Glycine 69 contacts S-adenosyl-L-methionine. Threonine 96 contacts GTP. Position 120 (serine 120) interacts with S-adenosyl-L-methionine. Lysine 157 is a GTP binding site. S-adenosyl-L-methionine is bound at residue methionine 191. Positions 254 and 257 each coordinate [4Fe-4S] cluster. A GTP-binding site is contributed by 259–261 (RLR). Cysteine 271 provides a ligand contact to [4Fe-4S] cluster.

This sequence belongs to the radical SAM superfamily. MoaA family. In terms of assembly, monomer and homodimer. The cofactor is [4Fe-4S] cluster.

It catalyses the reaction GTP + AH2 + S-adenosyl-L-methionine = (8S)-3',8-cyclo-7,8-dihydroguanosine 5'-triphosphate + 5'-deoxyadenosine + L-methionine + A + H(+). It functions in the pathway cofactor biosynthesis; molybdopterin biosynthesis. In terms of biological role, catalyzes the cyclization of GTP to (8S)-3',8-cyclo-7,8-dihydroguanosine 5'-triphosphate. In Yersinia pestis, this protein is GTP 3',8-cyclase.